The following is a 488-amino-acid chain: Proline--tRNA ligase (488 aa).

The protein belongs to the class-II aminoacyl-tRNA synthetase family. ProS type 3 subfamily. Homodimer.

Its subcellular location is the cytoplasm. The catalysed reaction is tRNA(Pro) + L-proline + ATP = L-prolyl-tRNA(Pro) + AMP + diphosphate. In terms of biological role, catalyzes the attachment of proline to tRNA(Pro) in a two-step reaction: proline is first activated by ATP to form Pro-AMP and then transferred to the acceptor end of tRNA(Pro). Can inadvertently accommodate and process cysteine. This Borreliella burgdorferi (strain ATCC 35210 / DSM 4680 / CIP 102532 / B31) (Borrelia burgdorferi) protein is Proline--tRNA ligase (proS).